Reading from the N-terminus, the 312-residue chain is Nodulation protein D 2 (312 aa).

The HTH lysR-type domain occupies 6-63; sequence LDLNLLVALDALMTKRSVTAAARSINLSQPAMSAAIARLRTYFGDDLFTMRGRELIPT. A DNA-binding region (H-T-H motif) is located at residues 23 to 42; the sequence is VTAAARSINLSQPAMSAAIA.

The protein belongs to the LysR transcriptional regulatory family.

Its function is as follows. Represses the expression of the nodABCIJ-nolO-noeI operon. The chain is Nodulation protein D 2 (nodD2) from Sinorhizobium fredii (strain NBRC 101917 / NGR234).